We begin with the raw amino-acid sequence, 196 residues long: uncharacterized protein (196 aa).

Belongs to the flavoredoxin family. Requires FMN as cofactor.

This is an uncharacterized protein from Aquifex aeolicus (strain VF5).